Consider the following 223-residue polypeptide: Gastrula zinc finger protein XlCGF52.1 (223 aa).

C2H2-type zinc fingers lie at residues 6 to 27 (FTCP…TEDH), 33 to 55 (FTCM…QRVH), 61 to 83 (YTCT…ISTH), 89 to 111 (FPCT…QRIH), 117 to 139 (FQCL…QRSH), 145 to 167 (YACS…ERIH), 173 to 195 (YECN…QKIH), and 201 to 223 (FTCT…QKIH).

It belongs to the krueppel C2H2-type zinc-finger protein family.

It is found in the nucleus. In terms of biological role, may be involved in transcriptional regulation. The chain is Gastrula zinc finger protein XlCGF52.1 from Xenopus laevis (African clawed frog).